Reading from the N-terminus, the 132-residue chain is Small ribosomal subunit protein uS11 (132 aa).

The protein belongs to the universal ribosomal protein uS11 family. As to quaternary structure, part of the 30S ribosomal subunit.

In terms of biological role, located on the platform of the 30S subunit. This chain is Small ribosomal subunit protein uS11, found in Saccharolobus solfataricus (strain ATCC 35092 / DSM 1617 / JCM 11322 / P2) (Sulfolobus solfataricus).